Here is a 305-residue protein sequence, read N- to C-terminus: Glycine--tRNA ligase alpha subunit (305 aa).

The protein belongs to the class-II aminoacyl-tRNA synthetase family. Tetramer of two alpha and two beta subunits.

Its subcellular location is the cytoplasm. The enzyme catalyses tRNA(Gly) + glycine + ATP = glycyl-tRNA(Gly) + AMP + diphosphate. The chain is Glycine--tRNA ligase alpha subunit from Streptococcus pneumoniae serotype 4 (strain ATCC BAA-334 / TIGR4).